Here is a 90-residue protein sequence, read N- to C-terminus: Actobindin-B/C (90 aa).

WH2 domains lie at 4-21 and 40-57; these read TANP…LKHA and DHSS…LKHV. The segment at 57–90 is disordered; the sequence is VETQDRSAPVTEGATVKSNNHSALLGEIKSKAQE.

Monomer.

Is able to bind two actin monomers at high concentrations of G-actin. Inhibits actin polymerization by sequestering G-actin and stabilizing actin dimers. The protein is Actobindin-B/C (abnB) of Dictyostelium discoideum (Social amoeba).